A 404-amino-acid polypeptide reads, in one-letter code: Multidrug resistance protein MdtG (404 aa).

11 helical membrane passes run 19–39 (LGCF…PLYV), 56–76 (LVFS…GGLA), 90–110 (LGMA…QFLI), 113–133 (ALLG…ATQV), 144–164 (TLST…GLLA), 171–191 (PVFF…FFFI), 222–242 (LFVT…ILTL), 254–274 (IAFI…LSAP), 288–308 (ILIV…FVQT), 317–337 (FLLG…LVYN), and 376–396 (AVFC…WNSL).

It belongs to the major facilitator superfamily. DHA1 family. MdtG (TC 2.A.1.2.20) subfamily.

Its subcellular location is the cell inner membrane. The polypeptide is Multidrug resistance protein MdtG (Salmonella arizonae (strain ATCC BAA-731 / CDC346-86 / RSK2980)).